A 499-amino-acid polypeptide reads, in one-letter code: Thioredoxin reductase 1, cytoplasmic (499 aa).

FAD contacts are provided by residues Ile-18–Gly-23, Asp-42–Phe-43, Thr-58–Cys-59, and Gly-63–Lys-67. Cys-59 and Cys-64 are disulfide-bonded. Position 68 is an N6-succinyllysine (Lys-68). At Tyr-131 the chain carries Phosphotyrosine. FAD contacts are provided by residues Tyr-131–Gly-132 and Thr-161. Residues Arg-166, Ala-198 to Glu-204, Arg-221 to Ser-222, Arg-226, Arg-226 to Phe-228, Val-291 to Arg-293, and Lys-315 each bind NADP(+). Tyr-200 contributes to the FAD binding site. Residues Asp-334, Glu-341–Thr-343, and His-472 contribute to the FAD site. Position 341 (Glu-341) interacts with NADP(+). Residue His-472 is the Proton acceptor of the active site. Residues Cys-497–Sec-498 constitute a cross-link (cysteinyl-selenocysteine (Cys-Sec)). Sec-498 is a non-standard amino acid (selenocysteine).

It belongs to the class-I pyridine nucleotide-disulfide oxidoreductase family. In terms of assembly, homodimer. FAD is required as a cofactor. In terms of processing, ISGylated.

It is found in the cytoplasm. The catalysed reaction is [thioredoxin]-dithiol + NADP(+) = [thioredoxin]-disulfide + NADPH + H(+). It carries out the reaction H2O2 + NADPH + H(+) = NADP(+) + 2 H2O. In terms of biological role, reduces disulfideprotein thioredoxin (Trx) to its dithiol-containing form. Homodimeric flavoprotein involved in the regulation of cellular redox reactions, growth and differentiation. Contains a selenocysteine residue at the C-terminal active site that is essential for catalysis. Also has reductase activity on hydrogen peroxide (H2O2). In Rattus norvegicus (Rat), this protein is Thioredoxin reductase 1, cytoplasmic.